A 90-amino-acid chain; its full sequence is DNA-binding protein HU (90 aa).

Positions Ala57–Lys90 are disordered.

Belongs to the bacterial histone-like protein family.

In terms of biological role, histone-like DNA-binding protein which is capable of wrapping DNA to stabilize it, and thus to prevent its denaturation under extreme environmental conditions. This is DNA-binding protein HU (hup) from Thermotoga maritima (strain ATCC 43589 / DSM 3109 / JCM 10099 / NBRC 100826 / MSB8).